The sequence spans 198 residues: MARCKS-related protein (198 aa).

The segment at 1–198 (MGSQSSKAPR…DPAPASEQNE (198 aa)) is disordered. Residue G2 is the site of N-myristoyl glycine attachment. Residue T14 is modified to Phosphothreonine. A phosphoserine mark is found at S22, S36, S41, and S48. The span at 53–62 (GTEEAAGATG) shows a compositional bias: low complexity. Phosphoserine is present on S71. Residues 76–85 (AKGEVPPKET) are compositionally biased toward basic and acidic residues. The residue at position 85 (T85) is a Phosphothreonine. Positions 86 to 98 (PKKKKKFSFKKPF) are enriched in basic residues. The tract at residues 87 to 110 (KKKKKFSFKKPFKLSGLSFKRNRK) is effector domain involved in lipid-binding and calmodulin-binding. S93, S101, and S104 each carry phosphoserine; by PKC. Position 119 is a phosphoserine (S119). The residue at position 120 (S120) is a Phosphoserine; by MAPK8. S132 carries the phosphoserine modification. A Phosphothreonine; by MAPK8 modification is found at T148. Phosphoserine occurs at positions 151 and 162. Low complexity predominate over residues 156 to 167 (AKGAEASAAAKG). A Phosphothreonine modification is found at T170. T182 carries the phosphothreonine; by MAPK8 modification.

This sequence belongs to the MARCKS family. Binds to filamentous actin (F-actin), but not to monomeric G-actin, independently of its phosphorylation status. Interacts with calmodulin. Phosphorylated. Phosphorylation at Ser-120 and Thr-182 is non-redundantly catalyzed by MAPK8 in vivo. Phosphorylation at Thr-148 is preferentially catalyzed by MAPK8 in vivo, but this modification can also be catalyzed by other kinases in the absence of MAPK8. May be phosphorylated by protein kinase C, which disrupts the interaction with calmodulin.

It is found in the cytoplasm. The protein localises to the cytoskeleton. It localises to the cell membrane. In terms of biological role, controls cell movement by regulating actin cytoskeleton homeostasis and filopodium and lamellipodium formation. When unphosphorylated, induces cell migration. When phosphorylated by MAPK8, induces actin bundles formation and stabilization, thereby reducing actin plasticity, hence restricting cell movement, including neuronal migration. May be involved in coupling the protein kinase C and calmodulin signal transduction systems. The protein is MARCKS-related protein (MARCKSL1) of Bos taurus (Bovine).